Consider the following 239-residue polypeptide: uncharacterized protein (239 aa).

This is an uncharacterized protein from Escherichia coli O157:H7.